A 468-amino-acid chain; its full sequence is A-type ATP synthase subunit B (468 aa).

Belongs to the ATPase alpha/beta chains family. In terms of assembly, has multiple subunits with at least A(3), B(3), C, D, E, F, H, I and proteolipid K(x).

It localises to the cell membrane. Functionally, component of the A-type ATP synthase that produces ATP from ADP in the presence of a proton gradient across the membrane. The B chain is a regulatory subunit. The chain is A-type ATP synthase subunit B from Haloferax volcanii (strain ATCC 29605 / DSM 3757 / JCM 8879 / NBRC 14742 / NCIMB 2012 / VKM B-1768 / DS2) (Halobacterium volcanii).